Consider the following 100-residue polypeptide: Small ribosomal subunit protein uS14c (100 aa).

Belongs to the universal ribosomal protein uS14 family. In terms of assembly, part of the 30S ribosomal subunit.

It is found in the plastid. The protein resides in the chloroplast. In terms of biological role, binds 16S rRNA, required for the assembly of 30S particles. The sequence is that of Small ribosomal subunit protein uS14c from Cucumis sativus (Cucumber).